We begin with the raw amino-acid sequence, 145 residues long: D-aminoacyl-tRNA deacylase (145 aa).

The Gly-cisPro motif, important for rejection of L-amino acids signature appears at 137 to 138; the sequence is GP.

It belongs to the DTD family. As to quaternary structure, homodimer.

It is found in the cytoplasm. The enzyme catalyses glycyl-tRNA(Ala) + H2O = tRNA(Ala) + glycine + H(+). The catalysed reaction is a D-aminoacyl-tRNA + H2O = a tRNA + a D-alpha-amino acid + H(+). An aminoacyl-tRNA editing enzyme that deacylates mischarged D-aminoacyl-tRNAs. Also deacylates mischarged glycyl-tRNA(Ala), protecting cells against glycine mischarging by AlaRS. Acts via tRNA-based rather than protein-based catalysis; rejects L-amino acids rather than detecting D-amino acids in the active site. By recycling D-aminoacyl-tRNA to D-amino acids and free tRNA molecules, this enzyme counteracts the toxicity associated with the formation of D-aminoacyl-tRNA entities in vivo and helps enforce protein L-homochirality. This Ectopseudomonas mendocina (strain ymp) (Pseudomonas mendocina) protein is D-aminoacyl-tRNA deacylase.